Reading from the N-terminus, the 198-residue chain is V-type ATP synthase subunit E (198 aa).

This sequence belongs to the V-ATPase E subunit family.

Functionally, produces ATP from ADP in the presence of a proton gradient across the membrane. The chain is V-type ATP synthase subunit E from Clostridium perfringens (strain ATCC 13124 / DSM 756 / JCM 1290 / NCIMB 6125 / NCTC 8237 / Type A).